We begin with the raw amino-acid sequence, 292 residues long: DSC E3 ubiquitin ligase complex subunit 3 (292 aa).

Topologically, residues 1 to 243 are extracellular; the sequence is MSAEPLLPTH…PIANIKHNKD (243 aa). N-linked (GlcNAc...) asparagine glycans are attached at residues Asn11, Asn41, Asn77, Asn99, and Asn145. Residues 244–264 form a helical membrane-spanning segment; that stretch reads LLLGICVGFFFGVFGILLMKF. At 265–273 the chain is on the cytoplasmic side; it reads DGLFNRRQK. Residues 274 to 291 form a helical membrane-spanning segment; it reads MAIFAGVIVNVMFCLVRG. Phe292 is a topological domain (extracellular).

It belongs to the dsc3 family. As to quaternary structure, component of the DSC E3 ligase complexes composed of at least TUL1, DSC2, DSC3, UBX3, CDC48 as well as VLD1 for the vacuole-localized complex or GLD1 for the Golgi/endosome-localized complex.

The protein resides in the endoplasmic reticulum membrane. Component of the DSC E3 ubiquitin ligase complexes that tag proteins present in Golgi, endosome and vacuole membranes and function in protein homeostasis under non-stress conditions and support a role in protein quality control. Involved in endocytic protein trafficking. This Saccharomyces cerevisiae (strain ATCC 204508 / S288c) (Baker's yeast) protein is DSC E3 ubiquitin ligase complex subunit 3.